A 339-amino-acid polypeptide reads, in one-letter code: Ketol-acid reductoisomerase (NADP(+)) (339 aa).

A KARI N-terminal Rossmann domain is found at 1–182 (MRVYYDRDAD…GGGRSGIIET (182 aa)). NADP(+) contacts are provided by residues 24 to 27 (YGSQ), K48, S51, T53, and 83 to 86 (DELQ). H108 is a catalytic residue. G134 lines the NADP(+) pocket. The KARI C-terminal knotted domain occupies 183-328 (NFREECETDL…AKLRAMMPWI (146 aa)). The Mg(2+) site is built by D191, E195, E227, and E231. S252 lines the substrate pocket.

The protein belongs to the ketol-acid reductoisomerase family. The cofactor is Mg(2+).

It catalyses the reaction (2R)-2,3-dihydroxy-3-methylbutanoate + NADP(+) = (2S)-2-acetolactate + NADPH + H(+). The catalysed reaction is (2R,3R)-2,3-dihydroxy-3-methylpentanoate + NADP(+) = (S)-2-ethyl-2-hydroxy-3-oxobutanoate + NADPH + H(+). Its pathway is amino-acid biosynthesis; L-isoleucine biosynthesis; L-isoleucine from 2-oxobutanoate: step 2/4. It functions in the pathway amino-acid biosynthesis; L-valine biosynthesis; L-valine from pyruvate: step 2/4. Its function is as follows. Involved in the biosynthesis of branched-chain amino acids (BCAA). Catalyzes an alkyl-migration followed by a ketol-acid reduction of (S)-2-acetolactate (S2AL) to yield (R)-2,3-dihydroxy-isovalerate. In the isomerase reaction, S2AL is rearranged via a Mg-dependent methyl migration to produce 3-hydroxy-3-methyl-2-ketobutyrate (HMKB). In the reductase reaction, this 2-ketoacid undergoes a metal-dependent reduction by NADPH to yield (R)-2,3-dihydroxy-isovalerate. In Mesorhizobium japonicum (strain LMG 29417 / CECT 9101 / MAFF 303099) (Mesorhizobium loti (strain MAFF 303099)), this protein is Ketol-acid reductoisomerase (NADP(+)).